The chain runs to 426 residues: Serine--tRNA ligase (426 aa).

L-serine is bound at residue 233-235; the sequence is TAE. 264-266 is a binding site for ATP; that stretch reads RSE. Glutamate 287 contributes to the L-serine binding site. 351–354 contributes to the ATP binding site; it reads EISS. Position 387 (serine 387) interacts with L-serine.

This sequence belongs to the class-II aminoacyl-tRNA synthetase family. Type-1 seryl-tRNA synthetase subfamily. Homodimer. The tRNA molecule binds across the dimer.

The protein resides in the cytoplasm. The catalysed reaction is tRNA(Ser) + L-serine + ATP = L-seryl-tRNA(Ser) + AMP + diphosphate + H(+). It carries out the reaction tRNA(Sec) + L-serine + ATP = L-seryl-tRNA(Sec) + AMP + diphosphate + H(+). Its pathway is aminoacyl-tRNA biosynthesis; selenocysteinyl-tRNA(Sec) biosynthesis; L-seryl-tRNA(Sec) from L-serine and tRNA(Sec): step 1/1. Its function is as follows. Catalyzes the attachment of serine to tRNA(Ser). Is also able to aminoacylate tRNA(Sec) with serine, to form the misacylated tRNA L-seryl-tRNA(Sec), which will be further converted into selenocysteinyl-tRNA(Sec). The sequence is that of Serine--tRNA ligase from Ectopseudomonas mendocina (strain ymp) (Pseudomonas mendocina).